Reading from the N-terminus, the 782-residue chain is Anoctamin-9 (782 aa).

The Cytoplasmic portion of the chain corresponds to 1–198 (MQGEESLRIL…LYFVWLGWYT (198 aa)). The helical transmembrane segment at 199-219 (YMLVPAALTGLLVFLSGFSLF) threads the bilayer. The Extracellular portion of the chain corresponds to 220–264 (EASQISKEICEAHDILMCPLGDHSRRYQRLSETCTFAKLTHLFDN). Ser-250 carries the post-translational modification Phosphoserine; by PKA. A helical transmembrane segment spans residues 265–285 (DGTVVFAIFMALWATVFLEIW). Topologically, residues 286–331 (KRQRARVVLHWDLYVWDEEQEEMALQLINCPDYKLRPYQHSYLRST) are cytoplasmic. A helical transmembrane segment spans residues 332 to 352 (VILVLTLLMICLMIGMAHVLV). Residues 353 to 373 (VYRVLASALFSSSAVPFLEEQ) are Extracellular-facing. The helical transmembrane segment at 374-394 (VTTAVVVTGALVHYVTIIIMT) threads the bilayer. Over 395–423 (KINRCVALKLCDFEMPRTFSERESRFTIR) the chain is Cytoplasmic. A helical membrane pass occupies residues 424-444 (FFTLQFFTHFSSLIYIAFILG). Residues 445–552 (RINGHPGKST…EMMIQYGFTT (108 aa)) are Extracellular-facing. Residues 553–573 (IFVAAFPLAPLLALFSNLVEI) form a helical membrane-spanning segment. Topologically, residues 574 to 604 (RLDAIKMVWLQRRLVPRKAKDIGTWLQVLET) are cytoplasmic. The chain crosses the membrane as a helical span at residues 605-625 (IGVLAVIANGMVIAFTSEFIP). Over 626–703 (RVVYKYRYSP…QFWFLLAIRL (78 aa)) the chain is Extracellular. N-linked (GlcNAc...) asparagine glycans are attached at residues Asn-641, Asn-652, Asn-674, and Asn-690. Residues 704-724 (AFVILFEHVALCIKLIAAWFV) traverse the membrane as a helical segment. Residues 725-782 (PDIPQSVKNKVLEVKYQRLREKMWHGRQRLGGVGAGSRPPMPAHPTPASIFSARSTDV) lie on the Cytoplasmic side of the membrane. A disordered region spans residues 756–782 (GVGAGSRPPMPAHPTPASIFSARSTDV).

The protein belongs to the anoctamin family. Phosphorylated on serine residues by cAMP-dependent protein kinase A (PKA) which is essential for activation of its cation channel activity. In terms of tissue distribution, expressed in the kidney. Expressed in the olfactory epithelium.

The protein resides in the cell membrane. It localises to the endoplasmic reticulum. The enzyme catalyses a 1,2-diacyl-sn-glycero-3-phospho-L-serine(in) = a 1,2-diacyl-sn-glycero-3-phospho-L-serine(out). The catalysed reaction is a beta-D-galactosyl-(1&lt;-&gt;1')-N-acylsphing-4-enine(out) = a beta-D-galactosyl-(1&lt;-&gt;1')-N-acylsphing-4-enine(in). It carries out the reaction a 1,2-diacyl-sn-glycero-3-phosphocholine(in) = a 1,2-diacyl-sn-glycero-3-phosphocholine(out). It catalyses the reaction Ca(2+)(in) = Ca(2+)(out). The enzyme catalyses Na(+)(in) = Na(+)(out). The catalysed reaction is K(+)(in) = K(+)(out). With respect to regulation, cation channel activity is activated via phosphorylation on serine residues by cAMP-dependent protein kinase A (PKA). Its function is as follows. PKA-activated nonselective cation channel. Discriminates poorly among cations but is more permeable to Ca(2+) ions than to monovalent cations. Acts as a calcium-activated calcium permeable channel which may operate as a endoplasmic reticulum (ER) Ca(2+)-leak channel, reducing the loading of the ER Ca(2+) store. Regulates intracellular Ca2+ signals, ion channel activity, and cytokine release in the renal tissue. Plays an important role in olfaction, amplifying cAMP-evoked cyclic nucleotide-gated (CNG) channel currents in the olfactory sensory neurons. Has calcium-dependent phospholipid scramblase activity; scrambles phosphatidylserine, phosphatidylcholine and galactosylceramide. Does not exhibit calcium-activated chloride channel (CaCC) activity. Can inhibit the activity of ANO1. The chain is Anoctamin-9 (ANO9) from Homo sapiens (Human).